A 2057-amino-acid polypeptide reads, in one-letter code: Fer-1-like protein 5 (2057 aa).

7 consecutive C2 domains span residues 1-99 (MLRL…VLFV), 152-265 (PGST…TLLR), 308-425 (DDTD…EGVY), 1057-1188 (DTRP…MRWH), 1213-1346 (KLGE…AQDY), 1467-1587 (PKPP…AHCG), and 1705-1853 (GPPG…KQCS). Asp1502, Asp1508, Asp1557, Phe1558, Asp1559, Ser1562, Asp1565, Asp1824, Ser1827, and Asp1830 together coordinate Ca(2+). The helical transmembrane segment at 1962-1982 (LIAFMVISIIALMLFNFIYSA) threads the bilayer.

The protein belongs to the ferlin family. As to quaternary structure, interacts (via second C2 domain) with EHD1 and EHD2. Ca(2+) serves as cofactor.

It localises to the cell membrane. The protein resides in the membrane. Its function is as follows. Plays a role in myoblast fusion; probable mediator of endocytic recycling for membrane trafficking events during myotube formation. This Homo sapiens (Human) protein is Fer-1-like protein 5 (FER1L5).